A 398-amino-acid polypeptide reads, in one-letter code: Acetate kinase (398 aa).

Residue Asn9 participates in Mg(2+) binding. Lys16 contacts ATP. Arg90 serves as a coordination point for substrate. Residue Asp147 is the Proton donor/acceptor of the active site. ATP contacts are provided by residues 207–211 (HIGNG), 282–284 (DLR), and 330–334 (GVGEN). Glu384 lines the Mg(2+) pocket.

The protein belongs to the acetokinase family. In terms of assembly, homodimer. It depends on Mg(2+) as a cofactor. Mn(2+) serves as cofactor.

The protein resides in the cytoplasm. The catalysed reaction is acetate + ATP = acetyl phosphate + ADP. It participates in metabolic intermediate biosynthesis; acetyl-CoA biosynthesis; acetyl-CoA from acetate: step 1/2. In terms of biological role, catalyzes the formation of acetyl phosphate from acetate and ATP. Can also catalyze the reverse reaction. This Staphylococcus haemolyticus (strain JCSC1435) protein is Acetate kinase.